Consider the following 346-residue polypeptide: Tetraacyldisaccharide 4'-kinase (346 aa).

53 to 60 (TCGGTGKT) contributes to the ATP binding site.

Belongs to the LpxK family.

It carries out the reaction a lipid A disaccharide + ATP = a lipid IVA + ADP + H(+). It participates in glycolipid biosynthesis; lipid IV(A) biosynthesis; lipid IV(A) from (3R)-3-hydroxytetradecanoyl-[acyl-carrier-protein] and UDP-N-acetyl-alpha-D-glucosamine: step 6/6. In terms of biological role, transfers the gamma-phosphate of ATP to the 4'-position of a tetraacyldisaccharide 1-phosphate intermediate (termed DS-1-P) to form tetraacyldisaccharide 1,4'-bis-phosphate (lipid IVA). This chain is Tetraacyldisaccharide 4'-kinase, found in Bartonella tribocorum (strain CIP 105476 / IBS 506).